Consider the following 397-residue polypeptide: Dual-specificity RNA methyltransferase RlmN (397 aa).

The Proton acceptor role is filled by glutamate 130. A Radical SAM core domain is found at valine 138–arginine 377. An intrachain disulfide couples cysteine 145 to cysteine 383. Cysteine 152, cysteine 156, and cysteine 159 together coordinate [4Fe-4S] cluster. S-adenosyl-L-methionine-binding positions include glycine 209–glutamate 210, serine 241, serine 263–histidine 265, and asparagine 340. Cysteine 383 serves as the catalytic S-methylcysteine intermediate.

Belongs to the radical SAM superfamily. RlmN family. Requires [4Fe-4S] cluster as cofactor.

The protein resides in the cytoplasm. It catalyses the reaction adenosine(2503) in 23S rRNA + 2 reduced [2Fe-2S]-[ferredoxin] + 2 S-adenosyl-L-methionine = 2-methyladenosine(2503) in 23S rRNA + 5'-deoxyadenosine + L-methionine + 2 oxidized [2Fe-2S]-[ferredoxin] + S-adenosyl-L-homocysteine. It carries out the reaction adenosine(37) in tRNA + 2 reduced [2Fe-2S]-[ferredoxin] + 2 S-adenosyl-L-methionine = 2-methyladenosine(37) in tRNA + 5'-deoxyadenosine + L-methionine + 2 oxidized [2Fe-2S]-[ferredoxin] + S-adenosyl-L-homocysteine. In terms of biological role, specifically methylates position 2 of adenine 2503 in 23S rRNA and position 2 of adenine 37 in tRNAs. m2A2503 modification seems to play a crucial role in the proofreading step occurring at the peptidyl transferase center and thus would serve to optimize ribosomal fidelity. This chain is Dual-specificity RNA methyltransferase RlmN, found in Granulibacter bethesdensis (strain ATCC BAA-1260 / CGDNIH1).